We begin with the raw amino-acid sequence, 219 residues long: Elongation factor Ts (219 aa).

The tract at residues 82–85 (TDFV) is involved in Mg(2+) ion dislocation from EF-Tu.

This sequence belongs to the EF-Ts family.

The protein localises to the cytoplasm. In terms of biological role, associates with the EF-Tu.GDP complex and induces the exchange of GDP to GTP. It remains bound to the aminoacyl-tRNA.EF-Tu.GTP complex up to the GTP hydrolysis stage on the ribosome. The polypeptide is Elongation factor Ts (Synechococcus sp. (strain CC9902)).